Here is a 146-residue protein sequence, read N- to C-terminus: Spermidine export protein MdtJ (146 aa).

The next 4 helical transmembrane spans lie at 1 to 21 (MIYWIFLVLAIICEVIGTLSM), 31 to 51 (TGMIVMWLMIATSYIFLAIAV), 54 to 74 (VALGVAYALWEGIGIVIITTF), and 76 to 96 (VLWFGESLSALKLGGLAMLIA).

Belongs to the drug/metabolite transporter (DMT) superfamily. Small multidrug resistance (SMR) (TC 2.A.7.1) family. MdtJ subfamily. As to quaternary structure, forms a complex with MdtI.

It localises to the cell inner membrane. Its function is as follows. Catalyzes the excretion of spermidine. The protein is Spermidine export protein MdtJ of Proteus mirabilis (strain HI4320).